A 340-amino-acid polypeptide reads, in one-letter code: E3 ubiquitin ligase BIG BROTHER-related (340 aa).

Disordered stretches follow at residues 1-56 and 133-182; these read MPME…GVGE and YDED…GNSD. Residues 34–46 are compositionally biased toward polar residues; it reads NRQTGVVSDTGSG. Acidic residues-rich tracts occupy residues 133-164 and 173-182; these read YDEDEFDDPENEDEDDDEDEYETDDDPQEDGL and DDQEDDGNSD. Residues 288 to 329 form an RING-type; atypical zinc finger; the sequence is CVICRLDYEDDEDLILLPCKHSYHSECINNWLKINKVCPVCS.

Auto-ubiquitinated.

It catalyses the reaction S-ubiquitinyl-[E2 ubiquitin-conjugating enzyme]-L-cysteine + [acceptor protein]-L-lysine = [E2 ubiquitin-conjugating enzyme]-L-cysteine + N(6)-ubiquitinyl-[acceptor protein]-L-lysine.. Its pathway is protein modification; protein ubiquitination. Its function is as follows. E3 ubiquitin-ligase probably involved in organ size regulation. This Arabidopsis thaliana (Mouse-ear cress) protein is E3 ubiquitin ligase BIG BROTHER-related (BBR).